We begin with the raw amino-acid sequence, 413 residues long: Pyruvate dehydrogenase complex subunit homolog DDB_G0271564, mitochondrial (413 aa).

The transit peptide at 1–19 (MNRILKQVSNTKGKGIRFY) directs the protein to the mitochondrion. Residues 29–67 (YMFPSVRRLLVEYGINSSKEVTATGPQNRLLKGDVLAYI) form the Peripheral subunit-binding (PSBD) domain.

This sequence belongs to the 2-oxoacid dehydrogenase family.

It is found in the mitochondrion. Functionally, the pyruvate dehydrogenase complex catalyzes the overall conversion of pyruvate to acetyl-CoA and CO(2). It contains multiple copies of three enzymatic components: pyruvate dehydrogenase (E1), dihydrolipoamide acetyltransferase (E2) and lipoamide dehydrogenase (E3). The protein is Pyruvate dehydrogenase complex subunit homolog DDB_G0271564, mitochondrial (pdhX) of Dictyostelium discoideum (Social amoeba).